Here is a 312-residue protein sequence, read N- to C-terminus: Small kinetochore-associated protein (312 aa).

Basic and acidic residues predominate over residues 1 to 13 (MATHKAEAQETDF). Disordered regions lie at residues 1 to 32 (MATH…PSSR), 55 to 176 (LKRS…KDKN), and 221 to 242 (KGLN…DPTD). The span at 75–84 (RPTTMASSKT) shows a compositional bias: polar residues. Composition is skewed to basic and acidic residues over residues 131 to 143 (DVTK…RENG) and 166 to 176 (QKPEEDLKDKN). Residues 156–312 (IRSSYKPLSK…LEEMEQLLEM (157 aa)) are interaction with SPAG5. The stretch at 169–210 (EEDLKDKNELLEAVNKQLHQKLTETQGELKDLTQKVELLEKF) forms a coiled coil. Positions 246–288 (LLETLKDELKLFNETAKKQMEELQALKVKLKLKEKERIQFLEQ) form a coiled coil.

In terms of assembly, part of an astrin (SPAG5)-kinastrin (SKAP) complex containing KNSTRN, SPAG5, PLK1, DYNLL1 and SGO2. Interacts with SPAG5. Directly binds to microtubules, although at relatively low affinity. Interacts with CENPE; this interaction greatly favors microtubule-binding. Interacts with DSN1/MIS13; leading to localization to kinetochores. Interacts with MAPRE1/EB1; leading to localization to the microtubule plus ends. Interacts with PRPF19. Interacts with DYNLL1. Interacts with MAP4.

Its subcellular location is the nucleus. The protein resides in the chromosome. It is found in the centromere. It localises to the kinetochore. The protein localises to the cytoplasm. Its subcellular location is the cytoskeleton. The protein resides in the spindle pole. It is found in the microtubule organizing center. Essential component of the mitotic spindle required for faithful chromosome segregation and progression into anaphase. Promotes the metaphase-to-anaphase transition and is required for chromosome alignment, normal timing of sister chromatid segregation, and maintenance of spindle pole architecture. The astrin (SPAG5)-kinastrin (SKAP) complex promotes stable microtubule-kinetochore attachments. Required for kinetochore oscillations and dynamics of microtubule plus-ends during live cell mitosis, possibly by forming a link between spindle microtubule plus-ends and mitotic chromosomes to achieve faithful cell division. This is Small kinetochore-associated protein (Knstrn) from Rattus norvegicus (Rat).